A 723-amino-acid chain; its full sequence is Probable alpha-fucosidase A (723 aa).

A signal peptide spans 1–15 (MRSLVLLGMSSLATA). 10 N-linked (GlcNAc...) asparagine glycosylation sites follow: Asn-77, Asn-98, Asn-117, Asn-171, Asn-194, Asn-243, Asn-334, Asn-558, Asn-566, and Asn-595.

This sequence belongs to the glycosyl hydrolase 95 family.

It is found in the secreted. It catalyses the reaction an alpha-L-fucoside + H2O = L-fucose + an alcohol. Alpha-fucosidase involved in degradation of fucosylated xyloglucans. Hydrolyzes alpha-1,2-linked fucose. This Aspergillus oryzae (strain ATCC 42149 / RIB 40) (Yellow koji mold) protein is Probable alpha-fucosidase A (afcA).